A 359-amino-acid chain; its full sequence is Protein mab-21-like 2-B (359 aa).

Belongs to the mab-21 family.

The protein localises to the nucleus. The protein resides in the cytoplasm. Functionally, required for several aspects of embryonic development including normal development of the eye. This Xenopus laevis (African clawed frog) protein is Protein mab-21-like 2-B (mab21l2-b).